The following is a 965-amino-acid chain: Glycine dehydrogenase (decarboxylating) 1 (965 aa).

Residue lysine 713 is modified to N6-(pyridoxal phosphate)lysine.

Belongs to the GcvP family. The glycine cleavage system is composed of four proteins: P, T, L and H. Requires pyridoxal 5'-phosphate as cofactor.

The catalysed reaction is N(6)-[(R)-lipoyl]-L-lysyl-[glycine-cleavage complex H protein] + glycine + H(+) = N(6)-[(R)-S(8)-aminomethyldihydrolipoyl]-L-lysyl-[glycine-cleavage complex H protein] + CO2. Its function is as follows. The glycine cleavage system catalyzes the degradation of glycine. The P protein binds the alpha-amino group of glycine through its pyridoxal phosphate cofactor; CO(2) is released and the remaining methylamine moiety is then transferred to the lipoamide cofactor of the H protein. This chain is Glycine dehydrogenase (decarboxylating) 1, found in Colwellia psychrerythraea (strain 34H / ATCC BAA-681) (Vibrio psychroerythus).